The sequence spans 82 residues: UPF0180 protein BH2667 (82 aa).

The protein belongs to the UPF0180 family.

The polypeptide is UPF0180 protein BH2667 (Halalkalibacterium halodurans (strain ATCC BAA-125 / DSM 18197 / FERM 7344 / JCM 9153 / C-125) (Bacillus halodurans)).